Reading from the N-terminus, the 283-residue chain is Non-selective voltage-gated ion channel VDAC1 (283 aa).

The residue at position 2 (alanine 2) is an N-acetylalanine. Lysine 12 is an ATP binding site. Residue lysine 12 forms a Glycyl lysine isopeptide (Lys-Gly) (interchain with G-Cter in ubiquitin) linkage. Serine 13 carries the post-translational modification Phosphoserine. Position 19 is a phosphothreonine (threonine 19). Position 20 (lysine 20) interacts with ATP. The residue at position 20 (lysine 20) is an N6-acetyllysine; alternate. An N6-succinyllysine; alternate modification is found at lysine 20. Lysine 20 participates in a covalent cross-link: Glycyl lysine isopeptide (Lys-Gly) (interchain with G-Cter in ubiquitin); alternate. The next 2 beta stranded transmembrane spans lie at leucine 26–serine 35 and leucine 39–alanine 47. Residues lysine 53 and lysine 61 each participate in a glycyl lysine isopeptide (Lys-Gly) (interchain with G-Cter in ubiquitin) cross-link. Residues valine 54–tryptophan 64 traverse the membrane as a beta stranded segment. The residue at position 67 (tyrosine 67) is a Phosphotyrosine. 3 beta stranded membrane-spanning segments follow: residues leucine 69–asparagine 76, threonine 80–aspartate 89, and leucine 95–serine 104. Threonine 107 carries the phosphothreonine modification. Lysine 109 carries the post-translational modification N6-acetyllysine; alternate. Lysine 109 is covalently cross-linked (Glycyl lysine isopeptide (Lys-Gly) (interchain with G-Cter in ubiquitin); alternate). Lysine 110 participates in a covalent cross-link: Glycyl lysine isopeptide (Lys-Gly) (interchain with G-Cter in ubiquitin). 4 beta stranded membrane passes run asparagine 111–arginine 120, isoleucine 123–aspartate 130, serine 137–glycine 145, and leucine 150–glutamate 158. Lysine 161 is covalently cross-linked (Glycyl lysine isopeptide (Lys-Gly) (interchain with G-Cter in ubiquitin)). The next 6 membrane-spanning stretches (beta stranded) occupy residues arginine 163–threonine 175, phenylalanine 178–asparagine 185, glutamate 189–valine 198, leucine 202–threonine 211, arginine 218–isoleucine 227, and alanine 231–asparagine 238. A Phosphoserine; by NEK1 modification is found at serine 193. Serine 240 bears the Phosphoserine mark. Position 242-244 (leucine 242–glycine 244) interacts with NAD(+). Residues leucine 242–leucine 251 form a beta stranded membrane-spanning segment. At lysine 252 the chain carries N6-acetyllysine. Residues glycine 254–leucine 263 traverse the membrane as a beta stranded segment. Residue serine 260–aspartate 264 coordinates NAD(+). Lysine 266 is modified (N6-acetyllysine; alternate). Lysine 266 is covalently cross-linked (Glycyl lysine isopeptide (Lys-Gly) (interchain with G-Cter in ubiquitin); alternate). Residues histidine 273–glutamine 282 form a beta stranded membrane-spanning segment. Lysine 274 is covalently cross-linked (Glycyl lysine isopeptide (Lys-Gly) (interchain with G-Cter in ubiquitin)).

Belongs to the eukaryotic mitochondrial porin family. Homodimer and homotrimer; in response to cyclic AMP or calcium; oligomerization is required for scramblase activity. Component of the mitochondrial permeability transition pore complex (mPTPC), at least composed of SPG7, VDAC1 and PPIF. Interacts with SPG7, NIPSNAP2 and SLC25A30. Interacts with hexokinases including HK1. The HK1-VDAC1 complex interacts with ATF2. Interacts with BCL2L1. Interacts with BAK1. Interacts with RTL10/BOP (via BH3 domain). Interacts with amyloid-beta and APP; induces VDAC1 dephosphorylation. Interacts with TMEM41B. Interacts with BCAP31. Interacts with HSPA9; this interaction couples ITPR1 to VDAC1. Phosphorylation at Ser-193 by NEK1 promotes the closed conformational state preventing excessive mitochondrial membrane permeability and subsequent apoptotic cell death after injury. Phosphorylation by the AKT-GSK3B axis stabilizes the protein probably by preventing ubiquitin-mediated proteasomal degradation. In terms of processing, ubiquitinated. Undergoes monoubiquitination and polyubiquitination by PRKN; monoubiquitination at Lys-274 inhibits apoptosis, whereas polyubiquitination leads to its degradation and promotes mitophagy. Deubiquitinated by USP30. In terms of tissue distribution, predominantly in brain astrocytes.

It localises to the mitochondrion outer membrane. Its subcellular location is the cell membrane. It is found in the membrane raft. It carries out the reaction chloride(in) = chloride(out). The catalysed reaction is K(+)(in) = K(+)(out). The enzyme catalyses ATP(in) = ATP(out). It catalyses the reaction Ca(2+)(in) = Ca(2+)(out). It carries out the reaction Na(+)(in) = Na(+)(out). The catalysed reaction is Mg(2+)(in) = Mg(2+)(out). The enzyme catalyses L-glutamate(out) = L-glutamate(in). It catalyses the reaction dopamine(out) = dopamine(in). It carries out the reaction acetylcholine(in) = acetylcholine(out). The catalysed reaction is Fe(III)-[cytochrome c](out) = Fe(III)-[cytochrome c](in). The enzyme catalyses a 1,2-diacyl-sn-glycero-3-phosphocholine(in) = a 1,2-diacyl-sn-glycero-3-phosphocholine(out). It catalyses the reaction a 1,2-diacyl-sn-glycero-3-phospho-L-serine(in) = a 1,2-diacyl-sn-glycero-3-phospho-L-serine(out). Its activity is regulated as follows. Inhibited by nitric oxide. Its function is as follows. Non-selective voltage-gated ion channel that mediates the transport of anions and cations through the mitochondrion outer membrane and plasma membrane. The channel at the outer mitochondrial membrane allows diffusion of small hydrophilic molecules; in the plasma membrane it is involved in cell volume regulation and apoptosis. It adopts an open conformation at low or zero membrane potential and a closed conformation at potentials above 30-40 mV. The open state has a weak anion selectivity whereas the closed state is cation-selective. Binds various signaling molecules, including the sphingolipid ceramide, the phospholipid phosphatidylcholine, and the sterols cholesterol and oxysterol. In depolarized mitochondria, acts downstream of PRKN and PINK1 to promote mitophagy or prevent apoptosis; polyubiquitination by PRKN promotes mitophagy, while monoubiquitination by PRKN decreases mitochondrial calcium influx which ultimately inhibits apoptosis. May participate in the formation of the permeability transition pore complex (PTPC) responsible for the release of mitochondrial products that triggers apoptosis. May mediate ATP export from cells. Part of a complex composed of HSPA9, ITPR1 and VDAC1 that regulates mitochondrial calcium-dependent apoptosis by facilitating calcium transport from the ER lumen to the mitochondria intermembrane space thus providing calcium for the downstream calcium channel MCU that directly releases it into mitochondria matrix. Mediates cytochrome c efflux. Catalyzes the scrambling of phospholipids across the outer mitochondrial membrane; the mechanism is unrelated to channel activity and is capable of translocating both anionic and zwitterionic phospholipids. This Bos taurus (Bovine) protein is Non-selective voltage-gated ion channel VDAC1.